We begin with the raw amino-acid sequence, 366 residues long: Phospho-N-acetylmuramoyl-pentapeptide-transferase (366 aa).

The next 10 membrane-spanning stretches (helical) occupy residues 27–47 (AALF…INSL), 71–91 (TPTM…LLWA), 93–113 (LSNV…AIGF), 134–154 (LGIE…TALA), 174–194 (FLIN…VGAG), 205–225 (GLAI…AYLA), 245–265 (LAVV…FNAP), 268–288 (AIFM…TVAV), 294–314 (IVMA…IIQV), and 343–363 (QVVI…LSTL).

It belongs to the glycosyltransferase 4 family. MraY subfamily. Mg(2+) is required as a cofactor.

The protein resides in the cell inner membrane. The catalysed reaction is UDP-N-acetyl-alpha-D-muramoyl-L-alanyl-gamma-D-glutamyl-meso-2,6-diaminopimeloyl-D-alanyl-D-alanine + di-trans,octa-cis-undecaprenyl phosphate = di-trans,octa-cis-undecaprenyl diphospho-N-acetyl-alpha-D-muramoyl-L-alanyl-D-glutamyl-meso-2,6-diaminopimeloyl-D-alanyl-D-alanine + UMP. It participates in cell wall biogenesis; peptidoglycan biosynthesis. Its function is as follows. Catalyzes the initial step of the lipid cycle reactions in the biosynthesis of the cell wall peptidoglycan: transfers peptidoglycan precursor phospho-MurNAc-pentapeptide from UDP-MurNAc-pentapeptide onto the lipid carrier undecaprenyl phosphate, yielding undecaprenyl-pyrophosphoryl-MurNAc-pentapeptide, known as lipid I. In Rhizobium etli (strain ATCC 51251 / DSM 11541 / JCM 21823 / NBRC 15573 / CFN 42), this protein is Phospho-N-acetylmuramoyl-pentapeptide-transferase.